We begin with the raw amino-acid sequence, 86 residues long: MQVIVVYDVPAKRTRIYRKLLRRRLEHLQYSVFFGELTAGQVTAMKNEIESELEPTDSIVVFEFDNPHAFDHTTFGDADEPGSRFT.

Asp-8 lines the Mg(2+) pocket.

Belongs to the CRISPR-associated endoribonuclease Cas2 protein family. As to quaternary structure, homodimer, forms a heterotetramer with a Cas1 homodimer. Mg(2+) is required as a cofactor.

CRISPR (clustered regularly interspaced short palindromic repeat), is an adaptive immune system that provides protection against mobile genetic elements (viruses, transposable elements and conjugative plasmids). CRISPR clusters contain sequences complementary to antecedent mobile elements and target invading nucleic acids. CRISPR clusters are transcribed and processed into CRISPR RNA (crRNA). Functions as a ssRNA-specific endoribonuclease. Involved in the integration of spacer DNA into the CRISPR cassette. Plasmid targeted by CRISPR locus P1 transform wild-type cells very poorly. In Haloferax volcanii (strain ATCC 29605 / DSM 3757 / JCM 8879 / NBRC 14742 / NCIMB 2012 / VKM B-1768 / DS2) (Halobacterium volcanii), this protein is CRISPR-associated endoribonuclease Cas2.